A 1442-amino-acid chain; its full sequence is CD109 antigen (1442 aa).

An N-terminal signal peptide occupies residues 1-21 (MRSRRLLSAAHLLCLCAVALA). 6 N-linked (GlcNAc...) asparagine glycosylation sites follow: Asn-67, Asn-117, Asn-246, Asn-278, Asn-370, and Asn-421. The segment at 595 to 704 (DKSVTLMENS…TWIWLDAYMG (110 aa)) is bait region (approximate). Residues 923–926 (CGEQ) constitute a cross-link (isoglutamyl cysteine thioester (Cys-Gln)). Asn-1088 carries N-linked (GlcNAc...) asparagine glycosylation. Ala-1419 carries the GPI-anchor amidated alanine lipid modification. Positions 1420–1442 (TDSLRRSSSLLVFCSVLLYFVQH) are cleaved as a propeptide — removed in mature form.

Belongs to the protease inhibitor I39 (alpha-2-macroglobulin) family. As to quaternary structure, heterodimer; disulfide-linked. Interacts with TGFB1 and TGFBR1. Forms a heteromeric complex with TGFBR1, TGFBR2 and TGFBR3 in a ligand-independent manner. N-glycosylated. In terms of processing, 2 forms of 150 (p150) and 120 kDa (p120) exist due to proteolytic degradation from a 180 kDa form.

It localises to the cell membrane. Functionally, modulates negatively TGFB1 signaling in keratinocytes. The sequence is that of CD109 antigen (Cd109) from Mus musculus (Mouse).